The chain runs to 908 residues: Glutamate receptor ionotropic, kainate 2 (908 aa).

A signal peptide spans 1-31; that stretch reads MKIIFPILSNPVFRRTVKLLLCLLWIGYSQG. The Extracellular portion of the chain corresponds to 32–561; the sequence is TTHVLRFGGI…VFSFLNPLSP (530 aa). Residues Asn-67, Asn-73, Asn-275, Asn-378, Asn-412, Asn-423, and Asn-430 are each glycosylated (N-linked (GlcNAc...) asparagine). A disulfide bridge links Cys-96 with Cys-347. The L-glutamate site is built by Pro-516, Ala-518, and Arg-523. Asn-546 carries an N-linked (GlcNAc...) asparagine glycan. A helical transmembrane segment spans residues 562–582; sequence DIWMYILLAYLGVSCVLFVIA. Topologically, residues 583–635 are cytoplasmic; that stretch reads RFSPYEWYNPHPCNPDSDVVENNFTLLNSFWFGVGALMQQGSELMPKALSTRI. Residues 636-656 form a helical membrane-spanning segment; that stretch reads VGGIWWFFTLIIISSYTANLA. The Extracellular portion of the chain corresponds to 657–819; that stretch reads AFLTVERMES…KEASALGVQN (163 aa). Positions 689, 690, and 738 each coordinate L-glutamate. An intrachain disulfide couples Cys-750 to Cys-804. Asn-751 carries N-linked (GlcNAc...) asparagine glycosylation. A helical transmembrane segment spans residues 820–840; that stretch reads IGGIFIVLAAGLVLSVFVAVG. At 841 to 908 the chain is on the cytoplasmic side; sequence EFLYKSKKNA…RRLPGKETMA (68 aa). A phosphoserine; by PKC mark is found at Ser-846 and Ser-868. Residue Lys-886 forms a Glycyl lysine isopeptide (Lys-Gly) (interchain with G-Cter in SUMO1) linkage.

The protein belongs to the glutamate-gated ion channel (TC 1.A.10.1) family. GRIK2 subfamily. As to quaternary structure, homotetramer and heterotetramer with GRIK5. Tetramers may be formed by the dimerization of dimers. Assembles into a kainate-gated homomeric channel that does not bind AMPA. Can form functional heteromeric receptors with GRIK5. Can form functional heteromeric receptors with GRIK3 and GRIK4. Interacts with DLG4. Interacts with NETO2. Interacts (via C-terminus) with KLHL17 (via kelch repeats); the interaction targets GRIK2 for degradation via ubiquitin-proteasome pathway. Sumoylation mediates kainate receptor-mediated endocytosis and regulates synaptic transmission. Sumoylation is enhanced by PIAS3 and desumoylated by SENP1. Post-translationally, ubiquitinated. Ubiquitination regulates the GRIK2 levels at the synapse by leading kainate receptor degradation through proteasome. In terms of processing, phosphorylated by PKC at Ser-868 upon agonist activation, this directly enhance sumoylation. In terms of tissue distribution, expression is higher in cerebellum than in cerebral cortex.

The protein resides in the cell membrane. The protein localises to the postsynaptic cell membrane. The enzyme catalyses Ca(2+)(in) = Ca(2+)(out). It catalyses the reaction Na(+)(in) = Na(+)(out). Cold receptor activity activated by temperatures between 10-19 degrees Celsius. Its function is as follows. Ionotropic glutamate receptor that functions as a cation permeable ligand-gated ion channel, gated by L-glutamate and the glutamatergic agonist kainic acid. L-glutamate acts as an excitatory neurotransmitter at many synapses in the central nervous system. Binding of the excitatory neurotransmitter L-glutamate induces a conformation change, leading to the opening of the cation channel, and thereby converts the chemical signal to an electrical impulse. The receptor then desensitizes rapidly and enters a transient inactive state, characterized by the presence of bound agonist. Modulates cell surface expression of NETO2. In association with GRIK3, involved in presynaptic facilitation of glutamate release at hippocampal mossy fiber synapses. Independent of its ionotropic glutamate receptor activity, acts as a thermoreceptor conferring sensitivity to cold temperatures. Functions in dorsal root ganglion neurons. This Homo sapiens (Human) protein is Glutamate receptor ionotropic, kainate 2 (GRIK2).